The chain runs to 198 residues: Pyridoxal 5'-phosphate synthase subunit PdxT (198 aa).

Residue 49–51 participates in L-glutamine binding; that stretch reads GES. The Nucleophile role is filled by cysteine 81. Residues arginine 113 and 141–142 contribute to the L-glutamine site; that span reads IR. Residues histidine 177 and glutamate 179 each act as charge relay system in the active site.

The protein belongs to the glutaminase PdxT/SNO family. In the presence of PdxS, forms a dodecamer of heterodimers. Only shows activity in the heterodimer.

It catalyses the reaction aldehydo-D-ribose 5-phosphate + D-glyceraldehyde 3-phosphate + L-glutamine = pyridoxal 5'-phosphate + L-glutamate + phosphate + 3 H2O + H(+). The enzyme catalyses L-glutamine + H2O = L-glutamate + NH4(+). Its pathway is cofactor biosynthesis; pyridoxal 5'-phosphate biosynthesis. In terms of biological role, catalyzes the hydrolysis of glutamine to glutamate and ammonia as part of the biosynthesis of pyridoxal 5'-phosphate. The resulting ammonia molecule is channeled to the active site of PdxS. This is Pyridoxal 5'-phosphate synthase subunit PdxT from Mycobacterium avium (strain 104).